The primary structure comprises 132 residues: Salivary cystatin-L2 (132 aa).

The N-terminal stretch at 1–18 (MTSSLALVLVFGGAAVCA) is a signal peptide. One can recognise a Cystatin domain in the interval 28–117 (ERSNQDDPEY…RTCTTVIYRN (90 aa)). Residues 87–131 (TCELTSTYNKDTCQANANAAQRTCTTVIYRNLQGEKSISSFECAA) form a required for interaction with mouse ANXA2 region. Cystine bridges form between C88/C99 and C110/C129.

The protein belongs to the cystatin family. In terms of assembly, monomer. Interacts (via loop 2) with mouse ANXA2; the interaction results in reduced activation of mouse NLRC4 inflammasome formation upon Anaplasma phagocytophilum infection. Detected in salivary gland and midgut.

It localises to the secreted. In terms of biological role, contributes to the suppression of the host's immune response to tick salivary proteins and is important for successful feeding on hosts. Inhibitor of cysteine proteinases. Inhibits host immune responses, probably via its inhibition of host cathepsins. Inhibits host papain (in vitro). Inhibits host cathepsin L (CTSL) (in vitro). Inhibits host cathepsin L2 (CTSV) (in vitro). Attenuates IFN-beta (IFNB1)-triggered JAK/STAT signaling pathway in mouse dendritic cells. Suppresses induction of interferon-stimulated gene IRF7 and production of CXCL10 in lipopolysaccharide (LPS)-activated dendritic cells. Functionally, (Microbial infection) Down-regulates TLR2-mediated host responses to infection by Borrelia burgdorferi and the production of chemokines CCL3 and CXCL10 by host dendritic cells. Enhances infection by the tick-transmitted pathogen B.burgdorferi (in vitro). (Microbial infection) Inhibits host inflammatory responses to Anaplasma phagocytophilum infection. Interacts with mouse ANXA2 and suppresses oligomerization of NLRC4, a key component of host inflammasomes that sense A.phagocytophilum infection. Indirectly targets caspase-1 (CASP1) activation and subsequent IL-1beta (IL1B) and IL18 release by inhibiting reactive oxygen species (ROS) production from NADPH oxidase complex in A.phagocytophilum-infected mouse macrophages. Its function is as follows. (Microbial infection) Promotes replication of tick-borne encephalitis virus in mouse dendritic cells and reduces anti-viral effect of host IFN-beta (IFNB1). The polypeptide is Salivary cystatin-L2 (Ixodes scapularis (Black-legged tick)).